A 46-amino-acid chain; its full sequence is GTP cyclohydrolase 1 (46 aa).

Cys7 is a binding site for Zn(2+).

This sequence belongs to the GTP cyclohydrolase I family. In terms of assembly, homomer.

It carries out the reaction GTP + H2O = 7,8-dihydroneopterin 3'-triphosphate + formate + H(+). It participates in cofactor biosynthesis; 7,8-dihydroneopterin triphosphate biosynthesis; 7,8-dihydroneopterin triphosphate from GTP: step 1/1. The chain is GTP cyclohydrolase 1 (folE) from Bacillus pumilus (Bacillus mesentericus).